The primary structure comprises 150 residues: 3-dehydroquinate dehydratase (150 aa).

Catalysis depends on tyrosine 26, which acts as the Proton acceptor. Substrate is bound by residues asparagine 77, histidine 83, and aspartate 90. Histidine 103 (proton donor) is an active-site residue. Residues 104–105 (LS) and arginine 114 contribute to the substrate site.

Belongs to the type-II 3-dehydroquinase family. Homododecamer.

The catalysed reaction is 3-dehydroquinate = 3-dehydroshikimate + H2O. Its pathway is metabolic intermediate biosynthesis; chorismate biosynthesis; chorismate from D-erythrose 4-phosphate and phosphoenolpyruvate: step 3/7. Functionally, catalyzes a trans-dehydration via an enolate intermediate. In Photorhabdus laumondii subsp. laumondii (strain DSM 15139 / CIP 105565 / TT01) (Photorhabdus luminescens subsp. laumondii), this protein is 3-dehydroquinate dehydratase.